We begin with the raw amino-acid sequence, 960 residues long: MTSKTENKKSVSSKTGRTTNNSTNKKTTEKSVKNVKTVKNNVSIDKNHSIRKNNEWERLYAFMMKYRVKGEKGSNLPVTHTMCDAPYGKYNIPDDMRSKFLRLYENAIVAGFKPHITELHKEYGPIIIDLDFCQPKEHGKRYYTEITIRNVVKLYNSIIKKYLNVEHSSFVTYVSEKERPVLRNGEYHDGLHITYPYICTQPSLQFVMREEFIKLAKKYKIFQKIPLTNNLESVFDEGVIYKTGWLLYGSRKNENSYPYYVSHCFLSIRNELHDYIIPGDNLKSRENIRHFINTHSCRRFFSLNDLTPLAEGVDPLAIDAKLKKIKEKINNNTNNTNTHKNTAELGDHHFNFIKAVSEETLVEAKNLVKLFSVQRATDYHTWYQVGRCLSNIDHRLLEDWITFSKKCPSKFKKEECERLWRNMNMKPSNYTMATLHYFASKDDPDKYFEMKKLKIDGLIKEGMEASHHTIAKLLIEKYKFIYKCASIKNGIWYEFRNHRWIEIDSAYTLRNLISEVLVNEYANRQRILFGEATRQDAENKKEKFNDAVNITKVIKQLNNNTFKNGVIKECADIAYDPNFLRNLDENNYLIGFENGVFDLEAGIFRDGCPDDCISLCTNYKYIEIDEDDETFKNINGFLKKIQPDKSMREYILTLLSTCLSGTNSEESFYVLTGSGANGKSKLMELLKYTLGDLYKPMDIRLLTEKRSSSSSASPELADKKGIRACPFDEPKASDEINTGFMKIFTGGDTITARALYKEPIYFKPQFKPFLLCNELPTIKSDDDGTWRRLKVIPFLSKFIKHSEATKKMKKEGLPKNHFWADTSLSEKLPDWKQGFMCLLLKYFRKYRKHGLIHPKLVTQHTVEYRKKCDVFQDFIGDYLVRVDNTKKGISVMDLYQNMREWYKSNYTGKCPNAKDLRNYVQHRMPTYNKNADMLTCYVLKTEVNQAGELIDDIDNITVVG.

Residues 1 to 32 (MTSKTENKKSVSSKTGRTTNNSTNKKTTEKSV) form a disordered region. A compositionally biased stretch (low complexity) spans 12–25 (SSKTGRTTNNSTNK). The SF3 helicase domain occupies 646 to 807 (SMREYILTLL…FIKHSEATKK (162 aa)).

This chain is Putative helicase L207/L206, found in Acanthamoeba polyphaga mimivirus (APMV).